A 177-amino-acid polypeptide reads, in one-letter code: MSRIGKKPVQVPAGITATVEGQKVTAKGPKGELFFVANDEISLKLENNAVVVTPVNQSKDARSKWGMSRTMIEGIFKGVKDGYERKLEINGVGYRAAMQGKNLQLALGFSHDVVYEPPVGISIAVPKPTEIIVSGINKQQVGQVAAEIREYRGPEPYKGKGVKYADERIVRKEGKKK.

The protein belongs to the universal ribosomal protein uL6 family. Part of the 50S ribosomal subunit.

Its function is as follows. This protein binds to the 23S rRNA, and is important in its secondary structure. It is located near the subunit interface in the base of the L7/L12 stalk, and near the tRNA binding site of the peptidyltransferase center. This Rhizobium etli (strain ATCC 51251 / DSM 11541 / JCM 21823 / NBRC 15573 / CFN 42) protein is Large ribosomal subunit protein uL6.